Here is a 321-residue protein sequence, read N- to C-terminus: Agamous-like MADS-box protein AGL80 (321 aa).

The region spanning Met1–Asn61 is the MADS-box domain. Residues Phe89–Thr114 adopt a coiled-coil conformation.

Interacts with AGL61 and AGL62. Forms a heterodimer with AGL61. Interacts with MEE14/CBP1. Expressed in the central cell of the female gametophyte and in early endosperm. Also detected in ovaries, young siliques, roots, leaves, stems, young flowers and anthers.

The protein resides in the nucleus. In terms of biological role, probable transcription factor. Controls central cell differentiation during female gametophyte development. Required for the expression of DEMETER and DD46, but not for the expression of FIS2. Probable transcription factor that may function in the maintenance of the proper function of the central cell in pollen tube attraction. The polypeptide is Agamous-like MADS-box protein AGL80 (AGL80) (Arabidopsis thaliana (Mouse-ear cress)).